We begin with the raw amino-acid sequence, 186 residues long: UPF0301 protein CV_3909 (186 aa).

Belongs to the UPF0301 (AlgH) family.

The protein is UPF0301 protein CV_3909 of Chromobacterium violaceum (strain ATCC 12472 / DSM 30191 / JCM 1249 / CCUG 213 / NBRC 12614 / NCIMB 9131 / NCTC 9757 / MK).